The sequence spans 247 residues: tRNA pseudouridine synthase A (247 aa).

Asp-53 (nucleophile) is an active-site residue. Tyr-111 serves as a coordination point for substrate.

It belongs to the tRNA pseudouridine synthase TruA family. Homodimer.

It catalyses the reaction uridine(38/39/40) in tRNA = pseudouridine(38/39/40) in tRNA. Its function is as follows. Formation of pseudouridine at positions 38, 39 and 40 in the anticodon stem and loop of transfer RNAs. This is tRNA pseudouridine synthase A from Bacillus licheniformis (strain ATCC 14580 / DSM 13 / JCM 2505 / CCUG 7422 / NBRC 12200 / NCIMB 9375 / NCTC 10341 / NRRL NRS-1264 / Gibson 46).